Here is a 700-residue protein sequence, read N- to C-terminus: Elongation factor G (700 aa).

Positions 10–286 (TKVRNIGIMA…AVIDYLPSPL (277 aa)) constitute a tr-type G domain. GTP is bound by residues 19–26 (AHIDAGKT), 83–87 (DTPGH), and 137–140 (NKMD).

Belongs to the TRAFAC class translation factor GTPase superfamily. Classic translation factor GTPase family. EF-G/EF-2 subfamily.

It localises to the cytoplasm. Functionally, catalyzes the GTP-dependent ribosomal translocation step during translation elongation. During this step, the ribosome changes from the pre-translocational (PRE) to the post-translocational (POST) state as the newly formed A-site-bound peptidyl-tRNA and P-site-bound deacylated tRNA move to the P and E sites, respectively. Catalyzes the coordinated movement of the two tRNA molecules, the mRNA and conformational changes in the ribosome. This chain is Elongation factor G, found in Kineococcus radiotolerans (strain ATCC BAA-149 / DSM 14245 / SRS30216).